The following is a 272-amino-acid chain: MSAIKVFILSDSIGETAHNVALAAAAQFSDYDIRYQRFPFVRTDSLLQTVLSQALKEHAAIFHTFVDRRLSQIVNQFCEAHELPYYDVITPALDTFSQITHVQPSNHPGTVHALNTNYFDRINAIEFAVTYDDGKNPSGFLEADVVLLGVSRTSKTPLSLYLANRNLKVANLPLVPQAQIPDEIWKVDPKKIFGLTNDPEKLNDIRRQRMVQYGLNPDTMYSNTDKIKAELEYADKIFKKIGCLVINVANKSIEETATLITESLNTDDTNNG.

Residue 149-156 participates in ADP binding; the sequence is GVSRTSKT.

The protein belongs to the pyruvate, phosphate/water dikinase regulatory protein family. PDRP subfamily.

The catalysed reaction is N(tele)-phospho-L-histidyl/L-threonyl-[pyruvate, phosphate dikinase] + ADP = N(tele)-phospho-L-histidyl/O-phospho-L-threonyl-[pyruvate, phosphate dikinase] + AMP + H(+). It carries out the reaction N(tele)-phospho-L-histidyl/O-phospho-L-threonyl-[pyruvate, phosphate dikinase] + phosphate + H(+) = N(tele)-phospho-L-histidyl/L-threonyl-[pyruvate, phosphate dikinase] + diphosphate. In terms of biological role, bifunctional serine/threonine kinase and phosphorylase involved in the regulation of the pyruvate, phosphate dikinase (PPDK) by catalyzing its phosphorylation/dephosphorylation. The polypeptide is Putative pyruvate, phosphate dikinase regulatory protein (Lactiplantibacillus plantarum (strain ATCC BAA-793 / NCIMB 8826 / WCFS1) (Lactobacillus plantarum)).